The following is a 481-amino-acid chain: Aspartyl/glutamyl-tRNA(Asn/Gln) amidotransferase subunit B (481 aa).

Belongs to the GatB/GatE family. GatB subfamily. As to quaternary structure, heterotrimer of A, B and C subunits.

The catalysed reaction is L-glutamyl-tRNA(Gln) + L-glutamine + ATP + H2O = L-glutaminyl-tRNA(Gln) + L-glutamate + ADP + phosphate + H(+). It catalyses the reaction L-aspartyl-tRNA(Asn) + L-glutamine + ATP + H2O = L-asparaginyl-tRNA(Asn) + L-glutamate + ADP + phosphate + 2 H(+). Allows the formation of correctly charged Asn-tRNA(Asn) or Gln-tRNA(Gln) through the transamidation of misacylated Asp-tRNA(Asn) or Glu-tRNA(Gln) in organisms which lack either or both of asparaginyl-tRNA or glutaminyl-tRNA synthetases. The reaction takes place in the presence of glutamine and ATP through an activated phospho-Asp-tRNA(Asn) or phospho-Glu-tRNA(Gln). This chain is Aspartyl/glutamyl-tRNA(Asn/Gln) amidotransferase subunit B, found in Pseudomonas fluorescens (strain ATCC BAA-477 / NRRL B-23932 / Pf-5).